The following is a 281-amino-acid chain: Insecticidal crystal toxin protein (281 aa).

9 antigenic epitope regions span residues 54–78, 91–104, 108–116, 131–148, 160–172, 189–196, 208–216, 221–236, and 247–256; these read NYSHILSFIKSLSIPATYKTQVYTF, IYTHLTTQIPAVKA, GTASKVVQG, FKITCQHSNFQQSYFIRI, AVINLSIPGVAEL, KYKDFQYL, QNISLVFNR, TNTTVLIDKIEFLPIT, and KLETVQQIIN.

The protein belongs to the delta endotoxin family.

Functionally, promotes colloidosmotic lysis by binding to the midgut epithelial cells of insects. Active against Mamestra brassicae. In Bacillus thuringiensis subsp. kurstaki, this protein is Insecticidal crystal toxin protein.